The following is a 312-amino-acid chain: Aspartate carbamoyltransferase catalytic subunit (312 aa).

Positions 58 and 59 each coordinate carbamoyl phosphate. Lysine 86 contributes to the L-aspartate binding site. Residues arginine 108, histidine 136, and glutamine 139 each contribute to the carbamoyl phosphate site. L-aspartate-binding residues include arginine 169 and arginine 223. Carbamoyl phosphate is bound by residues glycine 264 and proline 265.

This sequence belongs to the aspartate/ornithine carbamoyltransferase superfamily. ATCase family. As to quaternary structure, heterododecamer (2C3:3R2) of six catalytic PyrB chains organized as two trimers (C3), and six regulatory PyrI chains organized as three dimers (R2).

It catalyses the reaction carbamoyl phosphate + L-aspartate = N-carbamoyl-L-aspartate + phosphate + H(+). It functions in the pathway pyrimidine metabolism; UMP biosynthesis via de novo pathway; (S)-dihydroorotate from bicarbonate: step 2/3. In terms of biological role, catalyzes the condensation of carbamoyl phosphate and aspartate to form carbamoyl aspartate and inorganic phosphate, the committed step in the de novo pyrimidine nucleotide biosynthesis pathway. The polypeptide is Aspartate carbamoyltransferase catalytic subunit (Desulfitobacterium hafniense (strain DSM 10664 / DCB-2)).